A 185-amino-acid chain; its full sequence is Large ribosomal subunit protein uL5 (185 aa).

This sequence belongs to the universal ribosomal protein uL5 family. As to quaternary structure, part of the 50S ribosomal subunit; part of the 5S rRNA/L5/L18/L25 subcomplex. Contacts the 5S rRNA and the P site tRNA. Forms a bridge to the 30S subunit in the 70S ribosome.

This is one of the proteins that bind and probably mediate the attachment of the 5S RNA into the large ribosomal subunit, where it forms part of the central protuberance. In the 70S ribosome it contacts protein S13 of the 30S subunit (bridge B1b), connecting the 2 subunits; this bridge is implicated in subunit movement. Contacts the P site tRNA; the 5S rRNA and some of its associated proteins might help stabilize positioning of ribosome-bound tRNAs. This is Large ribosomal subunit protein uL5 from Rhizobium rhizogenes (strain K84 / ATCC BAA-868) (Agrobacterium radiobacter).